The following is a 231-amino-acid chain: Chromosome partition protein MukE (231 aa).

The disordered stretch occupies residues 211 to 231 (SLLADEEEQDYNEQAELEGEA). Over residues 214-231 (ADEEEQDYNEQAELEGEA) the composition is skewed to acidic residues.

This sequence belongs to the MukE family. Interacts, and probably forms a ternary complex, with MukF and MukB. The complex formation is stimulated by calcium or magnesium.

It localises to the cytoplasm. The protein localises to the nucleoid. In terms of biological role, involved in chromosome condensation, segregation and cell cycle progression. May participate in facilitating chromosome segregation by condensation DNA from both sides of a centrally located replisome during cell division. Probably acts via its interaction with MukB and MukF. The sequence is that of Chromosome partition protein MukE from Vibrio vulnificus (strain CMCP6).